The following is an 849-amino-acid chain: Coiled-coil domain-containing protein 87 (849 aa).

Residues Arg-387–Asp-415 adopt a coiled-coil conformation.

The protein belongs to the CCDC87 family.

Its function is as follows. Plays a role in spermatogenesis, where it is important for normal sperm head morphology. Also required for the acrosome reaction and thus normal male fertility. This Homo sapiens (Human) protein is Coiled-coil domain-containing protein 87 (CCDC87).